The sequence spans 1235 residues: DNA polymerase catalytic subunit (1235 aa).

Disordered stretches follow at residues 640–693 (QGRF…AGRH) and 1098–1134 (AAAP…ASKP). A compositionally biased stretch (basic and acidic residues) spans 650-661 (APKRPAAAREDE). The span at 662–675 (ERPEEEGEDEDERE) shows a compositional bias: acidic residues. The span at 676–691 (EGGGEREPEGARETAG) shows a compositional bias: basic and acidic residues.

It belongs to the DNA polymerase type-B family. Forms a complex with the ssDNA-binding protein UL29, the DNA polymerase processivity factor, and the alkaline exonuclease. Interacts with the putative helicase-primase complex subunit UL8; this interaction may coordinate leading and lagging strand DNA synthesis at the replication fork.

It is found in the host nucleus. It carries out the reaction DNA(n) + a 2'-deoxyribonucleoside 5'-triphosphate = DNA(n+1) + diphosphate. The catalysed reaction is Endonucleolytic cleavage to 5'-phosphomonoester.. Functionally, replicates viral genomic DNA. The replication complex is composed of six viral proteins: the DNA polymerase, processivity factor, primase, primase-associated factor, helicase, and ssDNA-binding protein. Additionally, the polymerase contains an intrinsic ribonuclease H (RNase H) activity that specifically degrades RNA/DNA heteroduplexes or duplex DNA substrates in the 5' to 3' direction. Therefore, it can catalyze the excision of the RNA primers that initiate the synthesis of Okazaki fragments at a replication fork during viral DNA replication. This is DNA polymerase catalytic subunit from Human herpesvirus 1 (strain KOS) (HHV-1).